Reading from the N-terminus, the 92-residue chain is Large ribosomal subunit protein eL43 (92 aa).

A C4-type zinc finger spans residues 39 to 60 (CEFCGKFAVKRKAVGIWGCKDC).

Belongs to the eukaryotic ribosomal protein eL43 family.

The polypeptide is Large ribosomal subunit protein eL43 (RPL37A) (Pseudotsuga menziesii (Douglas-fir)).